Reading from the N-terminus, the 243-residue chain is UPF0502 protein H16_B1091 (243 aa).

Residues 1-23 (MQSNHDSDASQAGDRPARPALRP) are disordered.

Belongs to the UPF0502 family.

In Cupriavidus necator (strain ATCC 17699 / DSM 428 / KCTC 22496 / NCIMB 10442 / H16 / Stanier 337) (Ralstonia eutropha), this protein is UPF0502 protein H16_B1091.